A 309-amino-acid polypeptide reads, in one-letter code: Protein FdhE (309 aa).

This sequence belongs to the FdhE family.

Its subcellular location is the cytoplasm. Necessary for formate dehydrogenase activity. This chain is Protein FdhE, found in Escherichia coli O127:H6 (strain E2348/69 / EPEC).